We begin with the raw amino-acid sequence, 410 residues long: Peptidase T (410 aa).

Residue His-79 participates in Zn(2+) binding. Residue Asp-81 is part of the active site. Asp-142 contributes to the Zn(2+) binding site. Glu-176 serves as the catalytic Proton acceptor. The Zn(2+) site is built by Glu-177, Asp-199, and His-381.

It belongs to the peptidase M20B family. It depends on Zn(2+) as a cofactor.

The protein localises to the cytoplasm. The enzyme catalyses Release of the N-terminal residue from a tripeptide.. In terms of biological role, cleaves the N-terminal amino acid of tripeptides. This chain is Peptidase T, found in Bacillus mycoides (strain KBAB4) (Bacillus weihenstephanensis).